Reading from the N-terminus, the 1556-residue chain is Lysine-specific demethylase 5C (1556 aa).

In terms of domain architecture, JmjN spans 14-55 (CPVFEPSWAEFRDPLGYIAKIRPIAEKSGICKIRPPADWQPP). The ARID domain occupies 79–169 (TRVKLNYLDQ…IVYPYEMYQS (91 aa)). Over residues 197 to 207 (LRQSVQPSKFN) the composition is skewed to polar residues. The disordered stretch occupies residues 197 to 227 (LRQSVQPSKFNSYGRRAKRLQPDPEPTEEDI). Residues K205, K229, K244, and K274 each participate in a glycyl lysine isopeptide (Lys-Gly) (interchain with G-Cter in SUMO2) cross-link. The tract at residues 257-303 (LRKKDKEGPECPPTVVVKEESGGDVKVESTSPKTFLESKEELSHSPE) is disordered. Basic and acidic residues predominate over residues 273-283 (VKEESGGDVKV). S287 carries the post-translational modification Phosphoserine. Residue K295 forms a Glycyl lysine isopeptide (Lys-Gly) (interchain with G-Cter in SUMO2) linkage. 2 positions are modified to phosphoserine: S301 and S317. A PHD-type 1 zinc finger spans residues 324 to 374 (SYVCRMCSRGDEDDKLLLCDGCDDNYHIFCLLPPLPEIPKGVWRCPKCVMA). The 167-residue stretch at 468–634 (EYATSGWNLN…AGRQCIEHYR (167 aa)) folds into the JmjC domain. Positions 514, 517, and 602 each coordinate Fe cation. Phosphoserine is present on residues S893 and S897. A Glycyl lysine isopeptide (Lys-Gly) (interchain with G-Cter in SUMO2) cross-link involves residue K1127. The PHD-type 2 zinc finger occupies 1185 to 1250 (TSVCVCGQVP…KFLCPLCMRS (66 aa)). 2 disordered regions span residues 1315–1362 (LQAE…SPEK) and 1441–1556 (ERHG…QQQL). Over residues 1335 to 1345 (PLREGSGKDMP) the composition is skewed to basic and acidic residues. Phosphoserine is present on S1359. The segment covering 1445-1460 (SRARGRALERRRRRKV) has biased composition (basic residues). Over residues 1461–1478 (DRGGEGDDPAREELEPKR) the composition is skewed to basic and acidic residues. Over residues 1485–1500 (EAEEAQEEEELEEETG) the composition is skewed to acidic residues. Composition is skewed to polar residues over residues 1513 to 1522 (SPSTQENQNG) and 1530 to 1540 (SGPSAPFSTLS). Positions 1541–1556 (PQLHVPCPQQPPQQQL) are enriched in low complexity.

The protein belongs to the JARID1 histone demethylase family. In terms of assembly, part of two distinct complexes, one containing E2F6, and the other containing REST. Interacts with ZMYND8. Fe(2+) is required as a cofactor.

It is found in the nucleus. The catalysed reaction is N(6),N(6),N(6)-trimethyl-L-lysyl(4)-[histone H3] + 3 2-oxoglutarate + 3 O2 = L-lysyl(4)-[histone H3] + 3 formaldehyde + 3 succinate + 3 CO2. Histone demethylase that specifically demethylates 'Lys-4' of histone H3, thereby playing a central role in histone code. Does not demethylate histone H3 'Lys-9', H3 'Lys-27', H3 'Lys-36', H3 'Lys-79' or H4 'Lys-20'. Demethylates trimethylated and dimethylated but not monomethylated H3 'Lys-4'. Participates in transcriptional repression of neuronal genes by recruiting histone deacetylases and REST at neuron-restrictive silencer elements. Represses the CLOCK-BMAL1 heterodimer-mediated transcriptional activation of the core clock component PER2. The sequence is that of Lysine-specific demethylase 5C (KDM5C) from Canis lupus familiaris (Dog).